The following is a 116-amino-acid chain: Large-conductance mechanosensitive channel (116 aa).

The next 2 membrane-spanning stretches (helical) occupy residues Glu-7–Phe-27 and Gly-64–Val-84.

Belongs to the MscL family. As to quaternary structure, homopentamer.

The protein resides in the cell membrane. Its function is as follows. Channel that opens in response to stretch forces in the membrane lipid bilayer. May participate in the regulation of osmotic pressure changes within the cell. This Staphylococcus epidermidis (strain ATCC 35984 / DSM 28319 / BCRC 17069 / CCUG 31568 / BM 3577 / RP62A) protein is Large-conductance mechanosensitive channel.